Consider the following 157-residue polypeptide: Mannose-specific lectin (157 aa).

Positions 1–19 (MAKASLLILAAIFLGVITP) form a signal peptide, or 23; in 70% of the molecules. Positions 24–132 (DNILYSGETL…DRWATGTHTG (109 aa)) constitute a Bulb-type lectin domain. Residues glutamine 49, aspartate 51, asparagine 53, tyrosine 57, aspartate 60, lysine 61, tryptophan 64, alanine 65, asparagine 67, glutamine 80, aspartate 82, asparagine 84, tyrosine 88, isoleucine 95, tryptophan 96, asparagine 99, asparagine 106, glutamine 112, aspartate 114, asparagine 116, tyrosine 120, and tryptophan 125 each contribute to the alpha-D-mannopyranose site. Cysteine 52 and cysteine 75 are disulfide-bonded. A propeptide spans 129-157 (THTGLVGIPASPPSEKYPTAGKIKLVTAK) (removed in mature form).

As to quaternary structure, homotetramer.

The protein resides in the secreted. In terms of biological role, mannose-specific lectin which binds alpha-D-linked mannose. Displays a high affinity for alpha-(1-3)-mannose oligomers. Displays antiviral activity and therefore may contribute to defense against infections. This Galanthus nivalis (Common snowdrop) protein is Mannose-specific lectin.